The chain runs to 349 residues: N-acetyltaurine hydrolase (349 aa).

Residues histidine 26, histidine 28, glutamate 169, histidine 201, histidine 230, and aspartate 298 each coordinate a divalent metal cation.

Belongs to the metallo-dependent hydrolases superfamily. Phosphotriesterase family. Requires a divalent metal cation as cofactor. As to expression, expressed primarily in proximal tubules of the kidney.

It localises to the cytoplasm. The protein localises to the cytosol. It carries out the reaction N-acetyltaurine + H2O = taurine + acetate. It catalyses the reaction N-propanoyltaurine + H2O = propanoate + taurine. The catalysed reaction is N-acetyl-L-methionine + H2O = L-methionine + acetate. The enzyme catalyses N-acetyl-L-isoleucine + H2O = L-isoleucine + acetate. It carries out the reaction N-acetyl-L-leucine + H2O = L-leucine + acetate. It catalyses the reaction N-acetyl-L-valine + H2O = L-valine + acetate. Its function is as follows. N-acetyltaurine hydrolase that regulates feeding by catalyzing the hydrolysis of N-acetyltaurine into taurine and acetate. N-acetyltaurine has anorexigenic and anti-obesity effects that are dependent on GFRAL receptor and GDF15. PTER also acts on other N-acetyl amino acids (Met, Ile, Leu, Val) and N-propionyltaurine, but at lower rates. Binds resiniferotoxin, a vanilloid that desensitizes nociceptive neurons. The protein is N-acetyltaurine hydrolase of Rattus norvegicus (Rat).